The following is a 107-amino-acid chain: uncharacterized protein (107 aa).

Residues 9 to 31 (AAAIITAPTILAMMSTVLRALIF) form a helical membrane-spanning segment.

It is found in the membrane. This is an uncharacterized protein from Archaeoglobus fulgidus (strain ATCC 49558 / DSM 4304 / JCM 9628 / NBRC 100126 / VC-16).